The chain runs to 216 residues: Uracil phosphoribosyltransferase (216 aa).

5-phospho-alpha-D-ribose 1-diphosphate is bound by residues Arg-85, Arg-110, and 135–143; that span reads DPMVATGYS. Uracil-binding positions include Ile-200 and 205 to 207; that span reads GDA. Asp-206 provides a ligand contact to 5-phospho-alpha-D-ribose 1-diphosphate.

Belongs to the UPRTase family. It depends on Mg(2+) as a cofactor.

The catalysed reaction is UMP + diphosphate = 5-phospho-alpha-D-ribose 1-diphosphate + uracil. The protein operates within pyrimidine metabolism; UMP biosynthesis via salvage pathway; UMP from uracil: step 1/1. Its activity is regulated as follows. Allosterically activated by GTP. Its function is as follows. Catalyzes the conversion of uracil and 5-phospho-alpha-D-ribose 1-diphosphate (PRPP) to UMP and diphosphate. This chain is Uracil phosphoribosyltransferase, found in Burkholderia ambifaria (strain ATCC BAA-244 / DSM 16087 / CCUG 44356 / LMG 19182 / AMMD) (Burkholderia cepacia (strain AMMD)).